Consider the following 82-residue polypeptide: Delta-conotoxin-like CnVIA (82 aa).

Residues 1–22 (MKLTCMMIVAVLFLTAWTFVTA) form the signal peptide. Positions 23–49 (DDSRNGLENLSPKARHEMKNPEASKSN) are excised as a propeptide. Cystine bridges form between Cys-54–Cys-69, Cys-61–Cys-73, and Cys-68–Cys-78.

Belongs to the conotoxin O1 superfamily. As to expression, expressed by the venom duct.

It is found in the secreted. In terms of biological role, delta-conotoxins bind to site 6 of voltage-gated sodium channels (Nav) and inhibit the inactivation process. The protein is Delta-conotoxin-like CnVIA of Conus consors (Singed cone).